Reading from the N-terminus, the 238-residue chain is Probable transcriptional regulatory protein TC_0742 (238 aa).

Residues 1–21 (MAGHSKWANTKHRKERADHKK) form a disordered region. Residues 9–21 (NTKHRKERADHKK) are compositionally biased toward basic residues.

Belongs to the TACO1 family.

The protein localises to the cytoplasm. The sequence is that of Probable transcriptional regulatory protein TC_0742 from Chlamydia muridarum (strain MoPn / Nigg).